We begin with the raw amino-acid sequence, 401 residues long: Histone acetyltransferase type B subunit 2 (401 aa).

5 WD repeats span residues Glu-116–Ser-147, Phe-158–Glu-189, Leu-206–Asp-237, Lys-249–Asp-280, and Gly-293–Asp-324. An interaction with the histone H4 N-terminus region spans residues Asp-335–Asp-339. The WD 6 repeat unit spans residues Gly-350–Lys-381.

It belongs to the WD repeat RBAP46/RBAP48/MSI1 family. In terms of assembly, component of the HAT-B complex composed of at least HAT1 and HAT2. In the cytoplasm, this complex binds to the histone H4 tail. In the nucleus, the HAT-B complex has an additional component, the histone H3/H4 chaperone HIF1.

The protein resides in the cytoplasm. The protein localises to the nucleus. Functionally, regulatory subunit of the histone acetylase B (HAT-B) complex. The complex acetylates 'Lys-12' of histone H4 which is required for telomeric silencing. HAT2 is required for high affinity binding of the acetyltransferase to histone H4, for the nuclear location of HAT1 and for the HAT1-HIF1 interaction. Alone, it is unable to bind to H4, requiring HAT1 for high affinity interaction with the histone tail. HAT2 also has a HAT1 independent function in life-span regulation. The sequence is that of Histone acetyltransferase type B subunit 2 (HAT2) from Saccharomyces cerevisiae (strain ATCC 204508 / S288c) (Baker's yeast).